The chain runs to 419 residues: L-rhamnose isomerase (419 aa).

Residues histidine 262, aspartate 294, and aspartate 296 each coordinate Mn(2+).

The protein belongs to the rhamnose isomerase family. In terms of assembly, homotetramer. Mn(2+) serves as cofactor.

The protein resides in the cytoplasm. It catalyses the reaction L-rhamnopyranose = L-rhamnulose. It participates in carbohydrate degradation; L-rhamnose degradation; glycerone phosphate from L-rhamnose: step 1/3. Catalyzes the interconversion of L-rhamnose and L-rhamnulose. In Escherichia coli O7:K1 (strain IAI39 / ExPEC), this protein is L-rhamnose isomerase.